A 413-amino-acid polypeptide reads, in one-letter code: Putative F-box protein At3g58820 (413 aa).

One can recognise an F-box domain in the interval 1-48 (MDGVSSLPNELLCHILSFLTTKEAALTSILSKRWRNLIAFVPNLYIDD).

The polypeptide is Putative F-box protein At3g58820 (Arabidopsis thaliana (Mouse-ear cress)).